A 196-amino-acid polypeptide reads, in one-letter code: Peptide deformylase (196 aa).

Residues Cys-105 and His-147 each contribute to the Fe cation site. Glu-148 is a catalytic residue. A Fe cation-binding site is contributed by His-151.

Belongs to the polypeptide deformylase family. Fe(2+) is required as a cofactor.

It carries out the reaction N-terminal N-formyl-L-methionyl-[peptide] + H2O = N-terminal L-methionyl-[peptide] + formate. Its function is as follows. Removes the formyl group from the N-terminal Met of newly synthesized proteins. Requires at least a dipeptide for an efficient rate of reaction. N-terminal L-methionine is a prerequisite for activity but the enzyme has broad specificity at other positions. In Christiangramia forsetii (strain DSM 17595 / CGMCC 1.15422 / KT0803) (Gramella forsetii), this protein is Peptide deformylase.